Here is a 293-residue protein sequence, read N- to C-terminus: Formamidopyrimidine-DNA glycosylase (293 aa).

The active-site Schiff-base intermediate with DNA is the Pro-2. Glu-3 functions as the Proton donor in the catalytic mechanism. Lys-58 functions as the Proton donor; for beta-elimination activity in the catalytic mechanism. Positions 104, 123, and 166 each coordinate DNA. The FPG-type zinc finger occupies 257-293; the sequence is AVYDREGERCRTPGCNGTVKRLVQNGRSTFWCSGCQT. Arg-283 (proton donor; for delta-elimination activity) is an active-site residue.

Belongs to the FPG family. Monomer. Requires Zn(2+) as cofactor.

It catalyses the reaction Hydrolysis of DNA containing ring-opened 7-methylguanine residues, releasing 2,6-diamino-4-hydroxy-5-(N-methyl)formamidopyrimidine.. It carries out the reaction 2'-deoxyribonucleotide-(2'-deoxyribose 5'-phosphate)-2'-deoxyribonucleotide-DNA = a 3'-end 2'-deoxyribonucleotide-(2,3-dehydro-2,3-deoxyribose 5'-phosphate)-DNA + a 5'-end 5'-phospho-2'-deoxyribonucleoside-DNA + H(+). Functionally, involved in base excision repair of DNA damaged by oxidation or by mutagenic agents. Acts as a DNA glycosylase that recognizes and removes damaged bases. Has a preference for oxidized purines, such as 7,8-dihydro-8-oxoguanine (8-oxoG). Has AP (apurinic/apyrimidinic) lyase activity and introduces nicks in the DNA strand. Cleaves the DNA backbone by beta-delta elimination to generate a single-strand break at the site of the removed base with both 3'- and 5'-phosphates. The polypeptide is Formamidopyrimidine-DNA glycosylase (Rhodopseudomonas palustris (strain HaA2)).